Here is a 24-residue protein sequence, read N- to C-terminus: DYE-linked aldehyde dehydrogenase, alpha chain (24 aa).

Heterotetramer composed of an alpha, a beta and two gamma chains. The cofactor is Mo-molybdopterin cytosine dinucleotide.

Active with aldehydes and formate esters as substrates. This is DYE-linked aldehyde dehydrogenase, alpha chain from Amycolatopsis methanolica.